We begin with the raw amino-acid sequence, 176 residues long: Large ribosomal subunit protein uL10 (176 aa).

The protein belongs to the universal ribosomal protein uL10 family. As to quaternary structure, part of the ribosomal stalk of the 50S ribosomal subunit. The N-terminus interacts with L11 and the large rRNA to form the base of the stalk. The C-terminus forms an elongated spine to which L12 dimers bind in a sequential fashion forming a multimeric L10(L12)X complex.

Its function is as follows. Forms part of the ribosomal stalk, playing a central role in the interaction of the ribosome with GTP-bound translation factors. The chain is Large ribosomal subunit protein uL10 from Hahella chejuensis (strain KCTC 2396).